Here is a 689-residue protein sequence, read N- to C-terminus: Beta-adrenergic receptor kinase 1 (689 aa).

Residues 1-190 (MADLEAVLAD…ELNIHLTMND (190 aa)) are N-terminal. The RGS domain occupies 54 to 175 (TFEKIFSQKL…IESDKFTRFC (122 aa)). Residues 191-453 (FSVHRIIGRG…AQEVKESPFF (263 aa)) enclose the Protein kinase domain. ATP-binding positions include 197–205 (IGRGGFGEV) and Lys-220. Residue Asp-317 is the Proton acceptor of the active site. One can recognise an AGC-kinase C-terminal domain in the interval 454–521 (RSLDWQMVFL…TISERWQQEV (68 aa)). One can recognise a PH domain in the interval 558-652 (DCIMHGYMSK…WKKELRDAYR (95 aa)). Ser-670 bears the Phosphoserine mark.

Belongs to the protein kinase superfamily. AGC Ser/Thr protein kinase family. GPRK subfamily. In terms of assembly, interacts with the heterodimer formed by GNB1 and GNG2. Interacts with GIT1. Interacts with, and phosphorylates chemokine-stimulated CCR5. Interacts with ARRB1. Interacts with LPAR1 and LPAR2. Interacts with RALA in response to LPAR1 activation. ADRBK1 and RALA mutually inhibit each other's binding to LPAR1. Interacts with ADRB2. As to expression, expressed in peripheral blood leukocytes.

It is found in the cytoplasm. It localises to the cell membrane. The protein localises to the postsynapse. The protein resides in the presynapse. It carries out the reaction [beta-adrenergic receptor] + ATP = [beta-adrenergic receptor]-phosphate + ADP + H(+). With respect to regulation, in contrast to other AGC family kinases, the catalytic activity is solely regulated by the binding of substrates and ligands, not by phosphorylation of the kinase domain. Specifically phosphorylates the agonist-occupied form of the beta-adrenergic and closely related receptors, probably inducing a desensitization of them. Key regulator of LPAR1 signaling. Competes with RALA for binding to LPAR1 thus affecting the signaling properties of the receptor. Desensitizes LPAR1 and LPAR2 in a phosphorylation-independent manner. Positively regulates ciliary smoothened (SMO)-dependent Hedgehog (Hh) signaling pathway by facilitating the trafficking of SMO into the cilium and the stimulation of SMO activity. Inhibits relaxation of airway smooth muscle in response to blue light. In Homo sapiens (Human), this protein is Beta-adrenergic receptor kinase 1.